We begin with the raw amino-acid sequence, 28 residues long: Turritoxin F21-2 (28 aa).

Expressed by the venom duct.

The protein resides in the secreted. Potent inhibitor of human alpha-3-beta-2 nAChRs (IC(50)=566.2 nM). Irreversibly inhibits the acetylcholine-induced response on human alpha-7/CHRNA7 (55% inhibition at 5.6 uM) and alpha-3-beta-2/CHRNA3-CHRNB2 (91% inhibition) nAChRs. This is Turritoxin F21-2 from Polystira nobilis (Sea snail).